The primary structure comprises 588 residues: Sperm-associated microtubule inner protein 4 (588 aa).

At Thr-219 the chain carries Phosphothreonine. Phosphoserine occurs at positions 224, 406, 421, 427, and 437. Residue Tyr-441 is modified to Phosphotyrosine. Residues Ser-457 and Ser-484 each carry the phosphoserine modification. The residue at position 512 (Thr-512) is a Phosphothreonine. Residue Ser-516 is modified to Phosphoserine. Lys-543 is covalently cross-linked (Glycyl lysine isopeptide (Lys-Gly) (interchain with G-Cter in SUMO2)). Ser-545 is subject to Phosphoserine.

The protein localises to the cytoplasm. Its subcellular location is the cytoskeleton. It is found in the microtubule organizing center. It localises to the centrosome. The protein resides in the flagellum axoneme. Its function is as follows. Microtubule inner protein (MIP) part of the dynein-decorated doublet microtubules (DMTs) in flagellum axoneme. May serve to reinforce and thus stabilize the microtubule structure in the sperm flagella. This is Sperm-associated microtubule inner protein 4 (Spmip4) from Rattus norvegicus (Rat).